Here is a 1481-residue protein sequence, read N- to C-terminus: DNA excision repair protein ERCC-6 (1481 aa).

The interval 1-506 (MFHEEVPNST…GFLFKKLFKY (506 aa)) is N-terminal domain; essential for its chromatin remodeling activity. The residue at position 158 (Ser158) is a Phosphoserine; by CDK2. Lys170 carries the N6-methylated lysine; by EHMT2 modification. Lys256 is covalently cross-linked (Glycyl lysine isopeptide (Lys-Gly) (interchain with G-Cter in SUMO2)). Residue Lys298 is modified to N6-methylated lysine; by EHMT2. A disordered region spans residues 309–452 (AIETKADQRS…RKVARRQDDG (144 aa)). The span at 327–337 (RLKKHSRKLQR) shows a compositional bias: basic residues. Basic and acidic residues predominate over residues 353–363 (KPLEPEVRPEA). 2 stretches are compositionally biased toward acidic residues: residues 378-390 (DGEEEEEQEEEEG) and 420-435 (EIDDDFFPSSEEEDEA). Ser428 and Ser429 each carry phosphoserine. Lys444 is modified (N6-methylated lysine; by EHMT2). A phosphoserine mark is found at Ser482 and Ser485. A Helicase ATP-binding domain is found at 515 to 691 (WELHCQQAGG…WSLFDFIFPG (177 aa)). 528 to 535 (DEMGLGKT) is an ATP binding site. The DEAH box motif lies at 642-645 (DEGH). A Helicase C-terminal domain is found at 839-998 (VVESLLKIWH…RRFFKSNDLY (160 aa)). 3 disordered regions span residues 1040-1096 (LGTD…NRAS), 1114-1238 (SVMS…DRSS), and 1307-1372 (GHRG…GAPS). Position 1047 is an N6-methylated lysine; by EHMT2 (Lys1047). A compositionally biased stretch (polar residues) spans 1138 to 1147 (ASTSEKQGSS). Residues 1192 to 1201 (QPKQKAKNSK) are compositionally biased toward basic residues. Basic and acidic residues predominate over residues 1202-1212 (HCRDAKFEGTR). The span at 1330-1345 (LPVQHPSSLTEKTQNN) shows a compositional bias: polar residues. The span at 1346 to 1364 (MKKEGKAHTPEHFSGKEDG) shows a compositional bias: basic and acidic residues. The CSA-interacting motif (CIM) signature appears at 1373–1385 (SSSLLARMRARNH). The segment at 1387–1416 (ILPERLESDSEHLAEAAAVPPCGTEHDDLL) is ubiquitin-binding domain (UBD). The tract at residues 1417–1481 (VDMRNFIAFQ…GIWKLKPEYC (65 aa)) is winged-helix domain (WHD). The tract at residues 1434-1481 (STQEILQEFESKLSVAQSCVFRELLRNLCNFHRTPGGEGIWKLKPEYC) is essential for its interaction with RNA polymerase II, transcription-coupled nucleotide excision repair activity, association with chromatin after UV irradiation and for mediating the UV-induced translocation of ERRC8 to the nuclear matrix.

It belongs to the SNF2/RAD54 helicase family. Homodimer. Binds DNA. Interacts with ERCC8. Interacts with RNA polymerase II; interaction is enhanced by UV irradiation. Component of the B-WICH complex, at least composed of SMARCA5/SNF2H, BAZ1B/WSTF, SF3B1, DEK, MYO1C, ERCC6, MYBBP1A and DDX21. Interacts with KIAA1530/UVSSA. Interacts with ELOA and CUL5; the interaction is induced by DNA damaging agents or by inhibitors of RNA polymerase II elongation. Interacts (via WHD region) with RIF1. Interacts with SMARCC2/BAF170, SMARCB1/BAF47 and the neuron-specific chromatin remodeling complex (nBAF complex). Interacts with ERCC5/XPG (via C-terminus); the interaction stimulates ERCC6/CSB binding to DNA repair bubble and ERCC6/CSB ATPase activity. May form a complex composed of RNA polymerase II, ERCC6/CSB and ERCC5/XPG which associates with the DNA repair bubble during transcription-coupled nucleotide excision repair. Interacts with CAND1, CSTF1, DDX3X, DDX5, DDX17, DDX23, DHX36, HDAC1, HNRNPU, MTA2, PRPF3, PSMD3, RBBP4, SFPQ, SMARCA1, SMARCA2, TOP1, USP7 and XRCC5. Phosphorylated in a cell cycle-dependent manner at Ser-158 by cyclin A-CDK2 in response to DNA damage. Phosphorylation at this site promotes the intramolecular interaction of the N-terminal domain with the helicase ATP-binding domain, thereby probably releasing the inhibitory effect of the N-terminal domain on its ATPase activity. Phosphorylation is essential for its chromatin remodeling activity. In terms of processing, ubiquitinated at the C-terminus. Ubiquitination by the CSA complex leads to ERCC6 proteasomal degradation in a UV-dependent manner. Stabilized following interaction with KIAA1530/UVSSA, which promotes recruitment of deubiquitinating enzyme USP7, leading to deubiquitination of ERCC6 thereby preventing UV-induced degradation of ERCC6 by the proteasome.

Its subcellular location is the nucleus. It is found in the chromosome. It catalyses the reaction ATP + H2O = ADP + phosphate + H(+). Essential factor involved in transcription-coupled nucleotide excision repair (TC-NER), a process during which RNA polymerase II-blocking lesions are rapidly removed from the transcribed strand of active genes. Plays a central role in the initiation of the TC-NER process: specifically recognizes and binds RNA polymerase II stalled at a lesion, and mediates recruitment of ERCC8/CSA, initiating DNA damage excision by TFIIH recruitment. Upon DNA-binding, it locally modifies DNA conformation by wrapping the DNA around itself, thereby modifying the interface between stalled RNA polymerase II and DNA. Acts as a chromatin remodeler at DSBs; DNA-dependent ATPase-dependent activity is essential for this function. Plays an important role in regulating the choice of the DNA double-strand breaks (DSBs) repair pathway and G2/M checkpoint activation; DNA-dependent ATPase activity is essential for this function. Regulates the DNA repair pathway choice by inhibiting non-homologous end joining (NHEJ), thereby promoting the homologous recombination (HR)-mediated repair of DSBs during the S/G2 phases of the cell cycle. Mediates the activation of the ATM- and CHEK2-dependent DNA damage responses thus preventing premature entry of cells into mitosis following the induction of DNA DSBs. Remodels chromatin by evicting histones from chromatin flanking DSBs, limiting RIF1 accumulation at DSBs thereby promoting BRCA1-mediated HR. Required for stable recruitment of ELOA and CUL5 to DNA damage sites. Also involved in UV-induced translocation of ERCC8 to the nuclear matrix. Essential for neuronal differentiation and neuritogenesis; regulates transcription and chromatin remodeling activities required during neurogenesis. This Mus musculus (Mouse) protein is DNA excision repair protein ERCC-6 (Ercc6).